The primary structure comprises 536 residues: MSDIWQQLSAHRAATEATPLTDYFAQDADRFARYSASAGEMLLDYSKTALDDTARDLLVQLAESVDLKSRIAAMMSGAKINSTENRAVLHTALRAPKDAVIEVDGENVVPGIQKVLAQMGAFATALREGSYQTKTGTAFTDVVNIGIGGSDLGPVMATLALAPYHDGPACHFVSNVDGAHIHDVLAGLNPETTLVVIASKTFTTIETMTNAETAIQWLKGALGEDVSTHLAAVSTALDKTAAMGIPDARVFGFADWVGGRYSMWGPIGLPIMIAVGPESFGEFLAGAAAMDQHFRDAPLMENLPALLGLIGVWHNNICGYGSRAVLPYDQRLSRLPAYLQQLDMESNGKSVALDGSPLPRASGPVVWGEPGTNGQHAFYQLLHQGTQVIPTEFLIAATGHEPELAHQHNLLKANCLAQSEALMLGRSWDEAREIAIARGFDGVDADRMAGHLSFPGNRPSVTLAYPKLTPFVFGQIVALYEHRVFTEGVIWGINSFDQWGVELGKELATRLLPMVEGADASQKDASTRGLLAKLST.

Glu345 serves as the catalytic Proton donor. Active-site residues include His376 and Lys505.

The protein belongs to the GPI family.

It is found in the cytoplasm. The enzyme catalyses alpha-D-glucose 6-phosphate = beta-D-fructose 6-phosphate. Its pathway is carbohydrate biosynthesis; gluconeogenesis. The protein operates within carbohydrate degradation; glycolysis; D-glyceraldehyde 3-phosphate and glycerone phosphate from D-glucose: step 2/4. In terms of biological role, catalyzes the reversible isomerization of glucose-6-phosphate to fructose-6-phosphate. The sequence is that of Glucose-6-phosphate isomerase from Ruegeria sp. (strain TM1040) (Silicibacter sp.).